The chain runs to 80 residues: Putative DNA-directed RNA polymerase subunit omega (80 aa).

It belongs to the RNA polymerase subunit omega family.

It localises to the plastid. It is found in the chloroplast. It carries out the reaction RNA(n) + a ribonucleoside 5'-triphosphate = RNA(n+1) + diphosphate. May be involved in RNA polymerase activity. This is Putative DNA-directed RNA polymerase subunit omega from Gracilaria tenuistipitata var. liui (Red alga).